The sequence spans 1181 residues: Katanin p80 WD40 repeat-containing subunit B1 homolog KTN80.2 (1181 aa).

WD repeat units lie at residues 13-53 (AHSA…SLMS), 56-95 (GHTSAVDSVAFDSAEVLVLAGASSGVIKLWDVEEAKMVRA), 98-137 (GHRSNCSAVEFHPFGEFLASGSSDANLKIWDIRKKGCIQT), 140-181 (GHSR…HEFK), 183-221 (HEGPIRSLDFHPLEFLLATGSADRTVKFWDLETFELIGS), 224-264 (PEAT…DGVD), and 266-303 (GWSTLGDLCISEGKLLGCSYYQNSVGIWVSDISQIEPY). A DWD box motif is present at residues 114-130 (FLASGSSDANLKIWDIR). 5 disordered regions span residues 361–383 (AHKSGSLSTPATSTGQAGDNKSL), 503–597 (KPPR…ESKS), 702–739 (TSMATDTPPVTSTRPDRTSATNLTSDVSGVTSKRQTRT), 754–869 (KMKS…VIST), and 988–1008 (TKTQQSSDILTQKEEPQISGR). 2 stretches are compositionally biased toward polar residues: residues 365 to 379 (GSLSTPATSTGQAGD) and 509 to 526 (RSPSTKYNEARWATSTDS). Basic and acidic residues-rich tracts occupy residues 530 to 553 (DSKKNGLESSRDMDLPTGLRDDRG) and 569 to 585 (RSERVLSPEKAGDELKS). 4 stretches are compositionally biased toward polar residues: residues 703–739 (SMATDTPPVTSTRPDRTSATNLTSDVSGVTSKRQTRT), 754–791 (KMKSDEPSITSTWPDRTSATDLTSDVSGVISSRQTRTS), 822–841 (SATNLTSDESPVTSTRQAKT), and 850–859 (ILNQRQTTNM). Residues 998–1008 (TQKEEPQISGR) are compositionally biased toward basic and acidic residues.

It belongs to the WD repeat KATNB1 family. In terms of assembly, component of KTN80-KTN1 complexes composed of a hexamer of KTN1-KTN80 heterodimers that sense microtubule (MT) geometry to confer precise MT severing. Interacts directly with AAA1/KTN1. Interacts with subunits of the CUL4-based E3 ligase complex DDB1A and DDB1B. Expressed at low levels in siliques, flowers, leaves, stems and roots.

It localises to the cytoplasm. The protein localises to the cytoskeleton. In terms of biological role, may participate in a complex which severs microtubules in an ATP-dependent manner. Microtubule severing may promote rapid reorganization of cellular microtubule arrays. Confers precision to microtubule (MT) severing by specific targeting of KTN1 to MT cleavage sites such as crossover or branching nucleation sites. Together with other KTN80s, regulates cell elongation by modulating MT organization. Negative regulator of abscisic acid (ABA) responses. May function as a substrate receptor for cullin-RING ubiquitin ligase 4 complexes (CRL4), a family of E3 ligases involved in protein degradation. In Arabidopsis thaliana (Mouse-ear cress), this protein is Katanin p80 WD40 repeat-containing subunit B1 homolog KTN80.2.